The primary structure comprises 195 residues: Nucleoside triphosphate pyrophosphatase (195 aa).

The active-site Proton acceptor is the Asp70.

Belongs to the Maf family. The cofactor is a divalent metal cation.

The protein resides in the cytoplasm. It catalyses the reaction a ribonucleoside 5'-triphosphate + H2O = a ribonucleoside 5'-phosphate + diphosphate + H(+). The enzyme catalyses a 2'-deoxyribonucleoside 5'-triphosphate + H2O = a 2'-deoxyribonucleoside 5'-phosphate + diphosphate + H(+). Its function is as follows. Nucleoside triphosphate pyrophosphatase. May have a dual role in cell division arrest and in preventing the incorporation of modified nucleotides into cellular nucleic acids. This chain is Nucleoside triphosphate pyrophosphatase, found in Microcystis aeruginosa (strain NIES-843 / IAM M-2473).